The following is a 645-amino-acid chain: DNA mismatch repair protein MutL (645 aa).

The protein belongs to the DNA mismatch repair MutL/HexB family.

This protein is involved in the repair of mismatches in DNA. It is required for dam-dependent methyl-directed DNA mismatch repair. May act as a 'molecular matchmaker', a protein that promotes the formation of a stable complex between two or more DNA-binding proteins in an ATP-dependent manner without itself being part of a final effector complex. This Geobacillus thermodenitrificans (strain NG80-2) protein is DNA mismatch repair protein MutL.